The chain runs to 154 residues: Large ribosomal subunit protein uL15 (154 aa).

Residues 1-61 form a disordered region; sequence MDLSTLKPVA…GGQMPLMRRM (61 aa).

Belongs to the universal ribosomal protein uL15 family. In terms of assembly, part of the 50S ribosomal subunit.

Functionally, binds to the 23S rRNA. The sequence is that of Large ribosomal subunit protein uL15 from Oenococcus oeni (strain ATCC BAA-331 / PSU-1).